Consider the following 346-residue polypeptide: UDP-3-O-acylglucosamine N-acyltransferase (346 aa).

Catalysis depends on H253, which acts as the Proton acceptor.

The protein belongs to the transferase hexapeptide repeat family. LpxD subfamily. In terms of assembly, homotrimer.

It carries out the reaction a UDP-3-O-[(3R)-3-hydroxyacyl]-alpha-D-glucosamine + a (3R)-hydroxyacyl-[ACP] = a UDP-2-N,3-O-bis[(3R)-3-hydroxyacyl]-alpha-D-glucosamine + holo-[ACP] + H(+). It functions in the pathway bacterial outer membrane biogenesis; LPS lipid A biosynthesis. Catalyzes the N-acylation of UDP-3-O-acylglucosamine using 3-hydroxyacyl-ACP as the acyl donor. Is involved in the biosynthesis of lipid A, a phosphorylated glycolipid that anchors the lipopolysaccharide to the outer membrane of the cell. This is UDP-3-O-acylglucosamine N-acyltransferase from Rickettsia conorii (strain ATCC VR-613 / Malish 7).